Consider the following 299-residue polypeptide: ATP phosphoribosyltransferase (299 aa).

Belongs to the ATP phosphoribosyltransferase family. Long subfamily. Mg(2+) serves as cofactor.

The protein localises to the cytoplasm. The enzyme catalyses 1-(5-phospho-beta-D-ribosyl)-ATP + diphosphate = 5-phospho-alpha-D-ribose 1-diphosphate + ATP. The protein operates within amino-acid biosynthesis; L-histidine biosynthesis; L-histidine from 5-phospho-alpha-D-ribose 1-diphosphate: step 1/9. With respect to regulation, feedback inhibited by histidine. Its function is as follows. Catalyzes the condensation of ATP and 5-phosphoribose 1-diphosphate to form N'-(5'-phosphoribosyl)-ATP (PR-ATP). Has a crucial role in the pathway because the rate of histidine biosynthesis seems to be controlled primarily by regulation of HisG enzymatic activity. The polypeptide is ATP phosphoribosyltransferase (Shewanella sediminis (strain HAW-EB3)).